A 637-amino-acid polypeptide reads, in one-letter code: tRNA uridine 5-carboxymethylaminomethyl modification enzyme MnmG (637 aa).

Position 18 to 23 (18 to 23) interacts with FAD; that stretch reads GAGHAG. Position 281-295 (281-295) interacts with NAD(+); it reads GPRYCPSIEDKIVRF.

Belongs to the MnmG family. As to quaternary structure, homodimer. Heterotetramer of two MnmE and two MnmG subunits. FAD serves as cofactor.

The protein localises to the cytoplasm. NAD-binding protein involved in the addition of a carboxymethylaminomethyl (cmnm) group at the wobble position (U34) of certain tRNAs, forming tRNA-cmnm(5)s(2)U34. This chain is tRNA uridine 5-carboxymethylaminomethyl modification enzyme MnmG, found in Ligilactobacillus salivarius (strain UCC118) (Lactobacillus salivarius).